Here is a 687-residue protein sequence, read N- to C-terminus: Polyphosphate kinase (687 aa).

Asn-45 is a binding site for ATP. Mg(2+) contacts are provided by Arg-375 and Arg-405. The active-site Phosphohistidine intermediate is His-435. Tyr-472, Arg-568, and His-596 together coordinate ATP.

Belongs to the polyphosphate kinase 1 (PPK1) family. The cofactor is Mg(2+). An intermediate of this reaction is the autophosphorylated ppk in which a phosphate is covalently linked to a histidine residue through a N-P bond.

It catalyses the reaction [phosphate](n) + ATP = [phosphate](n+1) + ADP. Catalyzes the reversible transfer of the terminal phosphate of ATP to form a long-chain polyphosphate (polyP). The sequence is that of Polyphosphate kinase from Burkholderia vietnamiensis (strain G4 / LMG 22486) (Burkholderia cepacia (strain R1808)).